The sequence spans 295 residues: Pyridoxal 5'-phosphate synthase subunit PdxS (295 aa).

Asp-25 contributes to the D-ribose 5-phosphate binding site. Lys-82 functions as the Schiff-base intermediate with D-ribose 5-phosphate in the catalytic mechanism. Gly-154 serves as a coordination point for D-ribose 5-phosphate. Arg-166 contributes to the D-glyceraldehyde 3-phosphate binding site. Residues Gly-215 and 236–237 (GS) contribute to the D-ribose 5-phosphate site.

It belongs to the PdxS/SNZ family. In terms of assembly, in the presence of PdxT, forms a dodecamer of heterodimers.

The catalysed reaction is aldehydo-D-ribose 5-phosphate + D-glyceraldehyde 3-phosphate + L-glutamine = pyridoxal 5'-phosphate + L-glutamate + phosphate + 3 H2O + H(+). The protein operates within cofactor biosynthesis; pyridoxal 5'-phosphate biosynthesis. Catalyzes the formation of pyridoxal 5'-phosphate from ribose 5-phosphate (RBP), glyceraldehyde 3-phosphate (G3P) and ammonia. The ammonia is provided by the PdxT subunit. Can also use ribulose 5-phosphate and dihydroxyacetone phosphate as substrates, resulting from enzyme-catalyzed isomerization of RBP and G3P, respectively. The sequence is that of Pyridoxal 5'-phosphate synthase subunit PdxS from Listeria welshimeri serovar 6b (strain ATCC 35897 / DSM 20650 / CCUG 15529 / CIP 8149 / NCTC 11857 / SLCC 5334 / V8).